The primary structure comprises 520 residues: Putative hydrolase Mb2247c (520 aa).

The signal sequence occupies residues 1-34; that stretch reads MAAMWRRRPLSSALLSFGLLLGGLPLAAPPLAGA. Residues 104 to 124 form a helical membrane-spanning segment; sequence FGALLVNPGGPGASAVDMVAA. An AB hydrolase-1 domain is found at 105–403; it reads GALLVNPGGP…APTPADPAAW (299 aa). The active-site Nucleophile is the Ser232. Residue Asp461 is part of the active site. The Proton donor role is filled by His488.

It belongs to the peptidase S33 family.

It is found in the cell membrane. The polypeptide is Putative hydrolase Mb2247c (Mycobacterium bovis (strain ATCC BAA-935 / AF2122/97)).